Consider the following 442-residue polypeptide: Xaa-Pro dipeptidase (442 aa).

Asp-245, Asp-256, His-338, Glu-383, and Glu-422 together coordinate Mn(2+).

The protein belongs to the peptidase M24B family. Bacterial-type prolidase subfamily. The cofactor is Mn(2+).

The catalysed reaction is Xaa-L-Pro dipeptide + H2O = an L-alpha-amino acid + L-proline. In terms of biological role, splits dipeptides with a prolyl residue in the C-terminal position. This Sodalis glossinidius (strain morsitans) protein is Xaa-Pro dipeptidase.